The chain runs to 344 residues: Phenylalanine--tRNA ligase alpha subunit (344 aa).

Mg(2+) is bound at residue Glu-256.

It belongs to the class-II aminoacyl-tRNA synthetase family. Phe-tRNA synthetase alpha subunit type 1 subfamily. Tetramer of two alpha and two beta subunits. The cofactor is Mg(2+).

The protein resides in the cytoplasm. The catalysed reaction is tRNA(Phe) + L-phenylalanine + ATP = L-phenylalanyl-tRNA(Phe) + AMP + diphosphate + H(+). The protein is Phenylalanine--tRNA ligase alpha subunit of Geobacillus thermodenitrificans (strain NG80-2).